Consider the following 355-residue polypeptide: Protein-glutamate methylesterase/protein-glutamine glutaminase 3 (355 aa).

The Response regulatory domain occupies 5–122 (KVLIVDDSAV…KQFLEESRVR (118 aa)). 4-aspartylphosphate is present on Asp56. The 191-residue stretch at 165 to 355 (IQTTEKVVVV…IAREVLRLCG (191 aa)) folds into the CheB-type methylesterase domain. Residues Ser177, His203, and Asp299 contribute to the active site.

Belongs to the CheB family. In terms of processing, phosphorylated by CheA. Phosphorylation of the N-terminal regulatory domain activates the methylesterase activity.

Its subcellular location is the cytoplasm. The catalysed reaction is [protein]-L-glutamate 5-O-methyl ester + H2O = L-glutamyl-[protein] + methanol + H(+). It carries out the reaction L-glutaminyl-[protein] + H2O = L-glutamyl-[protein] + NH4(+). Its function is as follows. Involved in chemotaxis. Part of a chemotaxis signal transduction system that modulates chemotaxis in response to various stimuli. Catalyzes the demethylation of specific methylglutamate residues introduced into the chemoreceptors (methyl-accepting chemotaxis proteins or MCP) by CheR. Also mediates the irreversible deamidation of specific glutamine residues to glutamic acid. The protein is Protein-glutamate methylesterase/protein-glutamine glutaminase 3 of Geobacter metallireducens (strain ATCC 53774 / DSM 7210 / GS-15).